Consider the following 1174-residue polypeptide: DNA-directed RNA polymerase subunit beta (1174 aa).

This sequence belongs to the RNA polymerase beta chain family. As to quaternary structure, the RNAP catalytic core consists of 2 alpha, 1 beta, 1 beta' and 1 omega subunit. When a sigma factor is associated with the core the holoenzyme is formed, which can initiate transcription.

It carries out the reaction RNA(n) + a ribonucleoside 5'-triphosphate = RNA(n+1) + diphosphate. DNA-dependent RNA polymerase catalyzes the transcription of DNA into RNA using the four ribonucleoside triphosphates as substrates. This is DNA-directed RNA polymerase subunit beta from Mycolicibacterium gilvum (strain PYR-GCK) (Mycobacterium gilvum (strain PYR-GCK)).